Here is a 147-residue protein sequence, read N- to C-terminus: MGKCRHNGEVSIFGVRPASFPYFPFNLMDRIGGFVILDELWLRRWCEIIEYPMKIPTLYVPIEDYGIPTVEDMDLIVDFIKYHVSNGREVVVSCIGGHGRTGTVLAIWAGLNGVENPIEYVRECYCECAVETEEQEEFVMEYLKKRL.

This sequence to M.jannaschii MJ0215.

This is an uncharacterized protein from Methanocaldococcus jannaschii (strain ATCC 43067 / DSM 2661 / JAL-1 / JCM 10045 / NBRC 100440) (Methanococcus jannaschii).